Here is a 274-residue protein sequence, read N- to C-terminus: Large ribosomal subunit protein uL2cz/uL2cy (274 aa).

The interval 225–274 (NPVDHPHGGGEGRAPIGRKKPTTPWGYPALGRRSRKRKKYSDSFILRRRK) is disordered.

It belongs to the universal ribosomal protein uL2 family. In terms of assembly, part of the 50S ribosomal subunit.

Its subcellular location is the plastid. It is found in the chloroplast. The sequence is that of Large ribosomal subunit protein uL2cz/uL2cy (rpl2-A) from Dioscorea elephantipes (Elephant's foot yam).